Consider the following 125-residue polypeptide: Small ribosomal subunit protein uS13 (125 aa).

Belongs to the universal ribosomal protein uS13 family. In terms of assembly, part of the 30S ribosomal subunit. Forms a loose heterodimer with protein S19. Forms two bridges to the 50S subunit in the 70S ribosome.

Its function is as follows. Located at the top of the head of the 30S subunit, it contacts several helices of the 16S rRNA. In the 70S ribosome it contacts the 23S rRNA (bridge B1a) and protein L5 of the 50S subunit (bridge B1b), connecting the 2 subunits; these bridges are implicated in subunit movement. Contacts the tRNAs in the A and P-sites. This chain is Small ribosomal subunit protein uS13, found in Orientia tsutsugamushi (strain Ikeda) (Rickettsia tsutsugamushi).